The chain runs to 1403 residues: Sushi, nidogen and EGF-like domain-containing protein 1 (1403 aa).

The N-terminal stretch at 1-24 (MRLGAAWALLLAAALGLGTRGVRA) is a signal peptide. In terms of domain architecture, NIDO spans 103–258 (AFWADVDNRR…GRWAFRIDDA (156 aa)). 3 consecutive EGF-like domains span residues 268–309 (TTSV…RRCH), 311–347 (DVNE…PTCE), and 349–385 (AQSP…ATCE). Intrachain disulfides connect Cys272-Cys284, Cys278-Cys297, Cys299-Cys308, Cys315-Cys326, Cys320-Cys335, Cys337-Cys346, Cys353-Cys364, Cys358-Cys373, Cys375-Cys384, Cys391-Cys402, Cys396-Cys411, Cys413-Cys422, Cys433-Cys444, Cys438-Cys453, Cys455-Cys464, Cys472-Cys480, Cys474-Cys488, and Cys490-Cys499. Asn292 carries an N-linked (GlcNAc...) asparagine glycan. The 37-residue stretch at 387-423 (DVDECSSDPCQNGGSCVDLVGNYSCICVEPFEGPQCE) folds into the EGF-like 4; calcium-binding domain. The N-linked (GlcNAc...) asparagine glycan is linked to Asn408. 2 EGF-like domains span residues 429–465 (VPSP…LDCR) and 468–500 (ILND…LLCE). Asn484 carries N-linked (GlcNAc...) asparagine glycosylation. Residue Asn536 is glycosylated (N-linked (GlcNAc...) asparagine). EGF-like domains lie at 541–577 (LPSP…RHCE), 580–616 (RPHL…RHCE), 619–655 (KPDS…RHCE), and 657–693 (APSP…HRCQ). Disulfide bonds link Cys545/Cys556, Cys550/Cys565, Cys567/Cys576, Cys584/Cys595, Cys589/Cys604, Cys606/Cys615, Cys623/Cys634, Cys628/Cys643, Cys645/Cys654, Cys661/Cys672, Cys666/Cys681, Cys683/Cys692, Cys698/Cys739, Cys724/Cys751, Cys757/Cys768, Cys762/Cys777, Cys779/Cys788, Cys795/Cys806, Cys800/Cys815, Cys817/Cys826, Cys833/Cys844, Cys838/Cys853, Cys855/Cys864, Cys871/Cys882, Cys876/Cys891, and Cys893/Cys902. A Sushi domain is found at 696–753 (VDCGHPEEVEHATMRFNGTHVGSVALYTCEPGFSLSALSHIRVCQPQGVWSQPPQCIE). Asn712 is a glycosylation site (N-linked (GlcNAc...) asparagine). Residues 753–789 (EVDECRSQPCLHGGSCQDLIADYQCLCSPGYEGVHCE) enclose the EGF-like 11; calcium-binding domain. Positions 791–827 (ETDECQAQPCRNGGSCRDLPRAFICQCPEGFVGIHCE) constitute an EGF-like 12; calcium-binding domain. EGF-like domains are found at residues 829-865 (EVDA…YNCE) and 867-903 (VSDP…KDCT). The N-linked (GlcNAc...) asparagine glycan is linked to Asn886. 3 Fibronectin type-III domains span residues 908–1006 (PPTA…TRPR), 1007–1105 (PIED…TRPL), and 1106–1200 (PPAN…SPRD). Asn977, Asn1015, Asn1109, Asn1139, and Asn1298 each carry an N-linked (GlcNAc...) asparagine glycan. One can recognise an EGF-like 15 domain in the interval 1306–1342 (TPGSCSEDACQNGGTCVPGADAHSCDCRPGFKGRHCE). 3 cysteine pairs are disulfide-bonded: Cys1310/Cys1321, Cys1315/Cys1330, and Cys1332/Cys1341.

Post-translationally, phosphorylated on serine and threonine residues. In terms of processing, N-glycosylated. Expressed in lung.

It is found in the secreted. Its subcellular location is the extracellular space. The protein localises to the extracellular matrix. This chain is Sushi, nidogen and EGF-like domain-containing protein 1, found in Mus musculus (Mouse).